The chain runs to 116 residues: Probable prefoldin subunit 2 (116 aa).

The protein belongs to the prefoldin subunit beta family. In terms of assembly, heterohexamer of two PFD-alpha type and four PFD-beta type subunits.

Binds specifically to cytosolic chaperonin (c-CPN) and transfers target proteins to it. Binds to nascent polypeptide chain and promotes folding in an environment in which there are many competing pathways for nonnative proteins. This Dictyostelium discoideum (Social amoeba) protein is Probable prefoldin subunit 2 (pfdn2).